The chain runs to 1020 residues: MPKNNAIHSIAVIGSGPIKIGQAAEFDYAGTQACLSLKAAGYHVILINSNPATIMTDTATADEVYLEPLTLTSVTKILRAAHPDALLPTLGGQTGLNLAMALDQAGVLNELKIQLLGTSLATINQAEDRAAFKTLMKRLHQPIPASTTVHHVTSALSFAEKIGYPVIVRPAFTLGGSGGGIANNAAELTQTLQRGLTMSPVTECLIEQSIAGFKEIEFEVMRDNQGTKIIVCSMENFDPVGIHTGDSIVYAPVQTLTDTEYQQLRTAALTIVEALDIRGGYNVQLAQDPNSRQYYVIEVNPRVSRSSALASKATGYPIAKIAADIAIGLNLSEIKNPVTQTTYAAFEPALDYVVAKIPRFAFDKFPTADAHLGTQMKATGEVMAIGSTLEEATLKAIASLEIDPKTQASLTPDHHVTTTEYIDQLTHPTDQRLFYLLAALQAGWPLAKLATLTQITPFFLSKLQHIAQLIRNIKQVPTSQHLLSAKKYGVSLATMAHYAQTSVATIAAMTADLPFVYKMVDTCAGEFASVTPYFYSTAFGQTNESHPLGHSILVLGSGPIRIGQGIEFDYTTVHCVKAIQQAGYHAIIVNNNPETVSTDFSTSDKLYFEPLTIERLMPIIALEQPAGVIVQFGGQTAINLAHQLTKLGVTVLGTSVSATDLTEDRQSFADCLRLLKIAQAAGTTVTELSGARQAAHAIGYPLLVRPSFVLGGRAMAIVHNDHELTPVIKSAVAAGHGAPILMDQYLAGTECEVDVLSDGTSCFIPGIMEHIEGAGVHSGDSITVYPPQHLSPAVQDKIVTIATKLAQHLHCVGMMNIQFVVTDDVYVIDVNPRASRTVPYMSKVTHLPLAQLATRLILGQSLATLGLVPGLLTPAPQQIAIKAPVFSFNKLPQSPVVLSPEMKSTGETLGIGPTFTTAWHAAMADSYHLETWQTVDGLITDIATVAQPAVQELFAANHLTVTTIANTTDWPAKTKAVGFTLNDQPDNPVAIAALNHGQPLITAIDTLKTLLAVTPTPATI.

The carboxyphosphate synthetic domain stretch occupies residues 1–401 (MPKNNAIHSI…ATLKAIASLE (401 aa)). ATP-binding residues include R129, R169, G175, G176, Q208, I210, E215, G241, I242, H243, Q284, and E298. Residues 133-327 (KTLMKRLHQP…IAKIAADIAI (195 aa)) enclose the ATP-grasp 1 domain. 3 residues coordinate Mg(2+): Q284, E298, and N300. The Mn(2+) site is built by Q284, E298, and N300. 2 oligomerization domain regions span residues 402-542 (IDPK…FGQT) and 402-544 (IDPK…QTNE). Carbamoyl phosphate synthetic domain stretches follow at residues 543 to 927 (NESH…ADSY) and 544 to 927 (ESHP…ADSY). One can recognise an ATP-grasp 2 domain in the interval 669-858 (ADCLRLLKIA…LAQLATRLIL (190 aa)). ATP contacts are provided by R705, Q744, L746, E750, G775, V776, H777, S778, and Q818. Mg(2+) is bound by residues Q818 and N831. The Mn(2+) site is built by Q818 and N831. The MGS-like domain maps to 927-1020 (YHLETWQTVD…LAVTPTPATI (94 aa)). Positions 928 to 1020 (HLETWQTVDG…LAVTPTPATI (93 aa)) are allosteric domain.

It belongs to the CarB family. In terms of assembly, composed of two chains; the small (or glutamine) chain promotes the hydrolysis of glutamine to ammonia, which is used by the large (or ammonia) chain to synthesize carbamoyl phosphate. Tetramer of heterodimers (alpha,beta)4. Requires Mg(2+) as cofactor. Mn(2+) is required as a cofactor.

The enzyme catalyses hydrogencarbonate + L-glutamine + 2 ATP + H2O = carbamoyl phosphate + L-glutamate + 2 ADP + phosphate + 2 H(+). It catalyses the reaction hydrogencarbonate + NH4(+) + 2 ATP = carbamoyl phosphate + 2 ADP + phosphate + 2 H(+). It functions in the pathway amino-acid biosynthesis; L-arginine biosynthesis; carbamoyl phosphate from bicarbonate: step 1/1. Functionally, large subunit of the glutamine-dependent carbamoyl phosphate synthetase (CPSase). CPSase catalyzes the formation of carbamoyl phosphate from the ammonia moiety of glutamine, carbonate, and phosphate donated by ATP, constituting the first step of the biosynthetic pathway leading to arginine and/or urea. The large subunit (synthetase) binds the substrates ammonia (free or transferred from glutamine from the small subunit), hydrogencarbonate and ATP and carries out an ATP-coupled ligase reaction, activating hydrogencarbonate by forming carboxy phosphate which reacts with ammonia to form carbamoyl phosphate. The polypeptide is Carbamoyl phosphate synthase arginine-specific large chain (Lactiplantibacillus plantarum (strain ATCC BAA-793 / NCIMB 8826 / WCFS1) (Lactobacillus plantarum)).